The sequence spans 358 residues: Magnesium-protoporphyrin IX monomethyl ester [oxidative] cyclase (358 aa).

This sequence belongs to the AcsF family. The cofactor is Fe cation.

The enzyme catalyses Mg-protoporphyrin IX 13-monomethyl ester + 3 NADPH + 3 O2 + 2 H(+) = 3,8-divinyl protochlorophyllide a + 3 NADP(+) + 5 H2O. The protein operates within porphyrin-containing compound metabolism; chlorophyll biosynthesis (light-independent). Functionally, catalyzes the formation of the isocyclic ring in chlorophyll biosynthesis. Mediates the cyclase reaction, which results in the formation of divinylprotochlorophyllide (Pchlide) characteristic of all chlorophylls from magnesium-protoporphyrin IX 13-monomethyl ester (MgPMME). The chain is Magnesium-protoporphyrin IX monomethyl ester [oxidative] cyclase from Trichodesmium erythraeum (strain IMS101).